We begin with the raw amino-acid sequence, 168 residues long: DNA damage-inducible transcript 3 protein (168 aa).

Residues 10–18 (FETVSSWEL) are interaction with TRIB3. An N-terminal region spans residues 10–26 (FETVSSWELEAWYEDLQ). Ser14, Ser15, Ser30, and Ser31 each carry phosphoserine; by CK2. Residues 34-130 (IGGTYISSPG…EKEQENERKV (97 aa)) form a disordered region. Residues 73 to 88 (TSTSQSPRSPDSSQSS) are compositionally biased toward low complexity. A phosphoserine; by MAPK14 mark is found at Ser78 and Ser81. In terms of domain architecture, bZIP spans 98–161 (QGRTRKRKQS…ETTRRALIDR (64 aa)). Residues 100 to 129 (RTRKRKQSGQCAARAGKQRMKEKEQENERK) are basic motif. Basic and acidic residues predominate over residues 118–130 (RMKEKEQENERKV). The interval 133–147 (LAEENERLKLEIERL) is leucine-zipper.

Belongs to the bZIP family. Heterodimer. Interacts with TCF7L2/TCF4, EP300/P300, HDAC1, HDAC5 and HDAC6. Interacts with TRIB3 which blocks its association with EP300/P300. Interacts with FOXO3, CEBPB and ATF4. In terms of processing, ubiquitinated, leading to its degradation by the proteasome. Post-translationally, phosphorylation at serine residues by MAPK14 enhances its transcriptional activation activity while phosphorylation at serine residues by CK2 inhibits its transcriptional activation activity.

It is found in the cytoplasm. The protein localises to the nucleus. Functionally, multifunctional transcription factor in ER stress response. Plays an essential role in the response to a wide variety of cell stresses and induces cell cycle arrest and apoptosis in response to ER stress. Plays a dual role both as an inhibitor of CCAAT/enhancer-binding protein (C/EBP) function and as an activator of other genes. Acts as a dominant-negative regulator of C/EBP-induced transcription: dimerizes with members of the C/EBP family, impairs their association with C/EBP binding sites in the promoter regions, and inhibits the expression of C/EBP regulated genes. Positively regulates the transcription of TRIB3, IL6, IL8, IL23, TNFRSF10B/DR5, PPP1R15A/GADD34, BBC3/PUMA, BCL2L11/BIM and ERO1L. Negatively regulates; expression of BCL2 and MYOD1, ATF4-dependent transcriptional activation of asparagine synthetase (ASNS), CEBPA-dependent transcriptional activation of hepcidin (HAMP) and CEBPB-mediated expression of peroxisome proliferator-activated receptor gamma (PPARG). Inhibits the canonical Wnt signaling pathway by binding to TCF7L2/TCF4, impairing its DNA-binding properties and repressing its transcriptional activity. Plays a regulatory role in the inflammatory response through the induction of caspase-11 (CASP4/CASP11) which induces the activation of caspase-1 (CASP1) and both these caspases increase the activation of pro-IL1B to mature IL1B which is involved in the inflammatory response. Acts as a major regulator of postnatal neovascularization through regulation of endothelial nitric oxide synthase (NOS3)-related signaling. The chain is DNA damage-inducible transcript 3 protein (Ddit3) from Rattus norvegicus (Rat).